Here is a 279-residue protein sequence, read N- to C-terminus: 3-methyl-2-oxobutanoate hydroxymethyltransferase (279 aa).

Residues Asp-53 and Asp-92 each coordinate Mg(2+). Residues 53 to 54, Asp-92, and Lys-122 contribute to the 3-methyl-2-oxobutanoate site; that span reads DS. Glu-124 is a binding site for Mg(2+). Glu-191 serves as the catalytic Proton acceptor.

This sequence belongs to the PanB family. As to quaternary structure, homodecamer; pentamer of dimers. Mg(2+) is required as a cofactor.

It localises to the cytoplasm. The catalysed reaction is 3-methyl-2-oxobutanoate + (6R)-5,10-methylene-5,6,7,8-tetrahydrofolate + H2O = 2-dehydropantoate + (6S)-5,6,7,8-tetrahydrofolate. Its pathway is cofactor biosynthesis; (R)-pantothenate biosynthesis; (R)-pantoate from 3-methyl-2-oxobutanoate: step 1/2. Its function is as follows. Catalyzes the reversible reaction in which hydroxymethyl group from 5,10-methylenetetrahydrofolate is transferred onto alpha-ketoisovalerate to form ketopantoate. The polypeptide is 3-methyl-2-oxobutanoate hydroxymethyltransferase (Maricaulis maris (strain MCS10) (Caulobacter maris)).